Consider the following 343-residue polypeptide: Replication initiation protein (343 aa).

Residues 42-61 are disordered; it reads ERKRTKRRRGEHSTKPKCEN.

Functionally, probably functions as an initiator for the IncI1 ColIb-P9 replicon. This is Replication initiation protein (repZ) from Escherichia coli.